A 232-amino-acid polypeptide reads, in one-letter code: U2 small nuclear ribonucleoprotein B'' (232 aa).

The 80-residue stretch at 10 to 89 (QSIYIQNLNE…KPMRLQYAKA (80 aa)) folds into the RRM 1 domain. The interval 100-157 (TFVPKDKKRKQEEKVERKREDSQRPNTANGPSANGPSANNGVPAPSFQPSGQETMPPN) is disordered. The segment covering 108–122 (RKQEEKVERKREDSQ) has biased composition (basic and acidic residues). 2 stretches are compositionally biased toward polar residues: residues 123-139 (RPNT…SANN) and 146-156 (FQPSGQETMPP). The 75-residue stretch at 158-232 (NILFIQNLPH…NPMVISFAKK (75 aa)) folds into the RRM 2 domain.

It belongs to the RRM U1 A/B'' family. Component of the spliceosome where it is associated with snRNP U2.

It is found in the nucleus. The protein resides in the cajal body. It localises to the nucleoplasm. The protein localises to the cytoplasm. Its function is as follows. Involved in nuclear pre-mRNA splicing. The chain is U2 small nuclear ribonucleoprotein B'' (U2B'') from Arabidopsis thaliana (Mouse-ear cress).